The sequence spans 249 residues: Probable transcriptional regulatory protein LBL_2537 (249 aa).

The protein belongs to the TACO1 family.

The protein resides in the cytoplasm. The polypeptide is Probable transcriptional regulatory protein LBL_2537 (Leptospira borgpetersenii serovar Hardjo-bovis (strain L550)).